The following is a 337-amino-acid chain: Fructose-1,6-bisphosphatase class 1 (337 aa).

Mg(2+) is bound by residues Glu-94, Asp-116, Leu-118, and Asp-119. Substrate contacts are provided by residues Asp-119–Ser-122, Asn-210, and Lys-276. Glu-282 lines the Mg(2+) pocket.

It belongs to the FBPase class 1 family. In terms of assembly, homotetramer. Mg(2+) serves as cofactor.

Its subcellular location is the cytoplasm. It carries out the reaction beta-D-fructose 1,6-bisphosphate + H2O = beta-D-fructose 6-phosphate + phosphate. It functions in the pathway carbohydrate biosynthesis; gluconeogenesis. The protein is Fructose-1,6-bisphosphatase class 1 of Burkholderia orbicola (strain MC0-3).